Consider the following 348-residue polypeptide: Holliday junction branch migration complex subunit RuvB (348 aa).

The segment at 4–184 (ADRLIAASGR…FGIVQRLEFY (181 aa)) is large ATPase domain (RuvB-L). Residues Ile23, Arg24, Gly65, Lys68, Thr69, Thr70, 131–133 (EDF), Arg174, Tyr184, and Arg221 each bind ATP. Thr69 serves as a coordination point for Mg(2+). Residues 185–255 (NDKDLSTIVS…VADMALNLLD (71 aa)) form a small ATPAse domain (RuvB-S) region. Positions 258–348 (ERGFDHSDRR…GGDFSEPGDE (91 aa)) are head domain (RuvB-H). DNA-binding residues include Arg294, Arg313, and Arg318.

This sequence belongs to the RuvB family. In terms of assembly, homohexamer. Forms an RuvA(8)-RuvB(12)-Holliday junction (HJ) complex. HJ DNA is sandwiched between 2 RuvA tetramers; dsDNA enters through RuvA and exits via RuvB. An RuvB hexamer assembles on each DNA strand where it exits the tetramer. Each RuvB hexamer is contacted by two RuvA subunits (via domain III) on 2 adjacent RuvB subunits; this complex drives branch migration. In the full resolvosome a probable DNA-RuvA(4)-RuvB(12)-RuvC(2) complex forms which resolves the HJ.

The protein resides in the cytoplasm. It carries out the reaction ATP + H2O = ADP + phosphate + H(+). Its function is as follows. The RuvA-RuvB-RuvC complex processes Holliday junction (HJ) DNA during genetic recombination and DNA repair, while the RuvA-RuvB complex plays an important role in the rescue of blocked DNA replication forks via replication fork reversal (RFR). RuvA specifically binds to HJ cruciform DNA, conferring on it an open structure. The RuvB hexamer acts as an ATP-dependent pump, pulling dsDNA into and through the RuvAB complex. RuvB forms 2 homohexamers on either side of HJ DNA bound by 1 or 2 RuvA tetramers; 4 subunits per hexamer contact DNA at a time. Coordinated motions by a converter formed by DNA-disengaged RuvB subunits stimulates ATP hydrolysis and nucleotide exchange. Immobilization of the converter enables RuvB to convert the ATP-contained energy into a lever motion, pulling 2 nucleotides of DNA out of the RuvA tetramer per ATP hydrolyzed, thus driving DNA branch migration. The RuvB motors rotate together with the DNA substrate, which together with the progressing nucleotide cycle form the mechanistic basis for DNA recombination by continuous HJ branch migration. Branch migration allows RuvC to scan DNA until it finds its consensus sequence, where it cleaves and resolves cruciform DNA. The chain is Holliday junction branch migration complex subunit RuvB from Pseudomonas putida (strain ATCC 47054 / DSM 6125 / CFBP 8728 / NCIMB 11950 / KT2440).